The following is a 145-amino-acid chain: D-aminoacyl-tRNA deacylase (145 aa).

Positions 137 to 138 (GP) match the Gly-cisPro motif, important for rejection of L-amino acids motif.

This sequence belongs to the DTD family. Homodimer.

The protein resides in the cytoplasm. It carries out the reaction glycyl-tRNA(Ala) + H2O = tRNA(Ala) + glycine + H(+). It catalyses the reaction a D-aminoacyl-tRNA + H2O = a tRNA + a D-alpha-amino acid + H(+). In terms of biological role, an aminoacyl-tRNA editing enzyme that deacylates mischarged D-aminoacyl-tRNAs. Also deacylates mischarged glycyl-tRNA(Ala), protecting cells against glycine mischarging by AlaRS. Acts via tRNA-based rather than protein-based catalysis; rejects L-amino acids rather than detecting D-amino acids in the active site. By recycling D-aminoacyl-tRNA to D-amino acids and free tRNA molecules, this enzyme counteracts the toxicity associated with the formation of D-aminoacyl-tRNA entities in vivo and helps enforce protein L-homochirality. The chain is D-aminoacyl-tRNA deacylase from Methylacidiphilum infernorum (isolate V4) (Methylokorus infernorum (strain V4)).